The following is a 140-amino-acid chain: Large ribosomal subunit protein uL14 (140 aa).

This sequence belongs to the universal ribosomal protein uL14 family.

The polypeptide is Large ribosomal subunit protein uL14 (RPL23) (Nicotiana tabacum (Common tobacco)).